The sequence spans 416 residues: Gamma-glutamyl phosphate reductase (416 aa).

Belongs to the gamma-glutamyl phosphate reductase family.

The protein resides in the cytoplasm. It catalyses the reaction L-glutamate 5-semialdehyde + phosphate + NADP(+) = L-glutamyl 5-phosphate + NADPH + H(+). Its pathway is amino-acid biosynthesis; L-proline biosynthesis; L-glutamate 5-semialdehyde from L-glutamate: step 2/2. Catalyzes the NADPH-dependent reduction of L-glutamate 5-phosphate into L-glutamate 5-semialdehyde and phosphate. The product spontaneously undergoes cyclization to form 1-pyrroline-5-carboxylate. This chain is Gamma-glutamyl phosphate reductase, found in Salmonella heidelberg (strain SL476).